The sequence spans 675 residues: Putative acyl-coenzyme A oxidase 3.2, peroxisomal (675 aa).

A peroxisome-targeting transit peptide spans 1–34; it reads MSENVELRRAHILANHILRSPRPSSNPSLTPEVC. 442–457 is an FAD binding site; sequence AVGGQGLKTENRVGHL.

This sequence belongs to the acyl-CoA oxidase family. Requires FAD as cofactor.

It is found in the peroxisome. It carries out the reaction a 2,3-saturated acyl-CoA + O2 = a (2E)-enoyl-CoA + H2O2. Its function is as follows. Catalyzes the desaturation of acyl-CoAs to 2-trans-enoyl-CoAs. This chain is Putative acyl-coenzyme A oxidase 3.2, peroxisomal (ACX3.2), found in Arabidopsis thaliana (Mouse-ear cress).